The sequence spans 190 residues: Small ribosomal subunit protein uS5 (190 aa).

The S5 DRBM domain occupies 19-82 (IIDKLVTINR…ERAKRSMIRV (64 aa)). Residues 161–190 (SVASRRGKKVSDILGRREPVAGQEGEEAHA) are disordered. Residues 169-179 (KVSDILGRREP) are compositionally biased toward basic and acidic residues.

It belongs to the universal ribosomal protein uS5 family. Part of the 30S ribosomal subunit. Contacts proteins S4 and S8.

With S4 and S12 plays an important role in translational accuracy. Functionally, located at the back of the 30S subunit body where it stabilizes the conformation of the head with respect to the body. The sequence is that of Small ribosomal subunit protein uS5 from Granulibacter bethesdensis (strain ATCC BAA-1260 / CGDNIH1).